The primary structure comprises 654 residues: tRNA 5-methylaminomethyl-2-thiouridine biosynthesis bifunctional protein MnmC (654 aa).

The interval 1–235 (MSDFQHAQLD…KREMLSGTYQ (235 aa)) is tRNA (mnm(5)s(2)U34)-methyltransferase. The interval 261-654 (VGGGLAGCAS…LRDLVRGQRG (394 aa)) is FAD-dependent cmnm(5)s(2)U34 oxidoreductase.

In the N-terminal section; belongs to the methyltransferase superfamily. tRNA (mnm(5)s(2)U34)-methyltransferase family. It in the C-terminal section; belongs to the DAO family. The cofactor is FAD.

It localises to the cytoplasm. It catalyses the reaction 5-aminomethyl-2-thiouridine(34) in tRNA + S-adenosyl-L-methionine = 5-methylaminomethyl-2-thiouridine(34) in tRNA + S-adenosyl-L-homocysteine + H(+). Functionally, catalyzes the last two steps in the biosynthesis of 5-methylaminomethyl-2-thiouridine (mnm(5)s(2)U) at the wobble position (U34) in tRNA. Catalyzes the FAD-dependent demodification of cmnm(5)s(2)U34 to nm(5)s(2)U34, followed by the transfer of a methyl group from S-adenosyl-L-methionine to nm(5)s(2)U34, to form mnm(5)s(2)U34. This chain is tRNA 5-methylaminomethyl-2-thiouridine biosynthesis bifunctional protein MnmC, found in Pseudomonas aeruginosa (strain ATCC 15692 / DSM 22644 / CIP 104116 / JCM 14847 / LMG 12228 / 1C / PRS 101 / PAO1).